Consider the following 234-residue polypeptide: 1-(5-phosphoribosyl)-5-[(5-phosphoribosylamino)methylideneamino] imidazole-4-carboxamide isomerase (234 aa).

Catalysis depends on Asp-9, which acts as the Proton acceptor. The active-site Proton donor is Asp-131.

Belongs to the HisA/HisF family.

It localises to the cytoplasm. It carries out the reaction 1-(5-phospho-beta-D-ribosyl)-5-[(5-phospho-beta-D-ribosylamino)methylideneamino]imidazole-4-carboxamide = 5-[(5-phospho-1-deoxy-D-ribulos-1-ylimino)methylamino]-1-(5-phospho-beta-D-ribosyl)imidazole-4-carboxamide. It participates in amino-acid biosynthesis; L-histidine biosynthesis; L-histidine from 5-phospho-alpha-D-ribose 1-diphosphate: step 4/9. The polypeptide is 1-(5-phosphoribosyl)-5-[(5-phosphoribosylamino)methylideneamino] imidazole-4-carboxamide isomerase (Staphylococcus epidermidis (strain ATCC 35984 / DSM 28319 / BCRC 17069 / CCUG 31568 / BM 3577 / RP62A)).